Reading from the N-terminus, the 255-residue chain is 5'-nucleotidase SurE (255 aa).

A divalent metal cation is bound by residues D8, D9, S39, and N95.

The protein belongs to the SurE nucleotidase family. A divalent metal cation is required as a cofactor.

It is found in the cytoplasm. It catalyses the reaction a ribonucleoside 5'-phosphate + H2O = a ribonucleoside + phosphate. Functionally, nucleotidase that shows phosphatase activity on nucleoside 5'-monophosphates. This chain is 5'-nucleotidase SurE, found in Thermosipho melanesiensis (strain DSM 12029 / CIP 104789 / BI429).